The sequence spans 426 residues: Serine hydroxymethyltransferase (426 aa).

Residues leucine 118 and 122–124 each bind (6S)-5,6,7,8-tetrahydrofolate; that span reads GHL. Lysine 227 carries the post-translational modification N6-(pyridoxal phosphate)lysine.

This sequence belongs to the SHMT family. As to quaternary structure, homodimer. Pyridoxal 5'-phosphate is required as a cofactor.

It is found in the cytoplasm. The enzyme catalyses (6R)-5,10-methylene-5,6,7,8-tetrahydrofolate + glycine + H2O = (6S)-5,6,7,8-tetrahydrofolate + L-serine. The protein operates within one-carbon metabolism; tetrahydrofolate interconversion. Its pathway is amino-acid biosynthesis; glycine biosynthesis; glycine from L-serine: step 1/1. In terms of biological role, catalyzes the reversible interconversion of serine and glycine with tetrahydrofolate (THF) serving as the one-carbon carrier. This reaction serves as the major source of one-carbon groups required for the biosynthesis of purines, thymidylate, methionine, and other important biomolecules. Also exhibits THF-independent aldolase activity toward beta-hydroxyamino acids, producing glycine and aldehydes, via a retro-aldol mechanism. This chain is Serine hydroxymethyltransferase, found in Mycobacterium leprae (strain Br4923).